Here is a 638-residue protein sequence, read N- to C-terminus: MLEQIRGPADLQHLSQSALSELAGEIRQFLIHKVAATGGHLGPNLGVVELTLALHRVFDSPHDPLIFDTGHQAYVHKMLTGRSHEFDSLRKKDGLSGYPSRSESEHDWVESSHASAALSYADGLAKAFELTGHRNRHVVAVVGDGALTGGMCWEALNNIAAARRPVVIVVNDNGRSYAPTIGGFADHLAALRLQPGYERVLEEGRKAVRGLPVIGEFCYQCMHSVKAGIKDALSPQVMFTDLGLKYVGPIDGHDEHAVESALRHARGFNAPVIVHVVTRKGMGYAPAENDEAEQMHACGVIDVATGRATKVAAPGWTSSFSEALIDYGAKRRDIVAITAAMPGPTGLSAFRDRFPDRFFDVGIAEQHAMTSAAGLAMGGLHPVVAIYSTFLNRAFDQLMMDVALHKLPVTLVLDRSGVTGPDGASHNGMWDLSVLGIVPGMRVAAPRDGARLREELGEALDVNDAPTAIRFPKGDVGEDIPAVRRHRGVDVLAEPADGLSDDVLLVAVGPFASMALTVAERLRKQGIGVTVVDPRWVLPVPEVLTEFAAAHKLVVTVEDNGLHGGIGSSVSAALRHAEVDVPCRDVGLPQQFFDHASRGEVLADVGVTDRNISRQITGWVAALGATPADADEVSERLD.

Thiamine diphosphate is bound by residues H71 and 112 to 114; that span reads SHA. D144 contributes to the Mg(2+) binding site. Thiamine diphosphate is bound by residues 145 to 146, N173, Y284, and E365; that span reads GA. Mg(2+) is bound at residue N173.

It belongs to the transketolase family. DXPS subfamily. Homodimer. It depends on Mg(2+) as a cofactor. Thiamine diphosphate serves as cofactor.

It catalyses the reaction D-glyceraldehyde 3-phosphate + pyruvate + H(+) = 1-deoxy-D-xylulose 5-phosphate + CO2. It participates in metabolic intermediate biosynthesis; 1-deoxy-D-xylulose 5-phosphate biosynthesis; 1-deoxy-D-xylulose 5-phosphate from D-glyceraldehyde 3-phosphate and pyruvate: step 1/1. In terms of biological role, catalyzes the acyloin condensation reaction between C atoms 2 and 3 of pyruvate and glyceraldehyde 3-phosphate to yield 1-deoxy-D-xylulose-5-phosphate (DXP). This Mycobacterium sp. (strain KMS) protein is 1-deoxy-D-xylulose-5-phosphate synthase.